The sequence spans 416 residues: Enterobactin exporter EntS (416 aa).

Residues 1–21 lie on the Cytoplasmic side of the membrane; that stretch reads MNKQSWLLNLSLLKTHPAFRA. The chain crosses the membrane as a helical span at residues 22–42; it reads VFLARFISIVSLGLLGVAVPV. Topologically, residues 43 to 55 are periplasmic; that stretch reads QIQMMTHSTWQVG. The chain crosses the membrane as a helical span at residues 56-76; it reads LSVTLTGGAMFVGLMVGGVLA. At 77 to 83 the chain is on the cytoplasmic side; sequence DRYERKK. The chain crosses the membrane as a helical span at residues 84–104; it reads VILLARGTCGIGFIGLCLNAL. At 105–109 the chain is on the periplasmic side; the sequence is LPEPS. The helical transmembrane segment at 110–130 threads the bilayer; that stretch reads LLAIYLLGLWDGFFASLGVTA. At 131–156 the chain is on the cytoplasmic side; that stretch reads LLAATPALVGRENLMQAGALTMLTVR. Residues 157-177 form a helical membrane-spanning segment; the sequence is LGSVISPMIGGLLLATGGVAW. A topological domain (periplasmic) is located at residue asparagine 178. Residues 179-199 traverse the membrane as a helical segment; the sequence is YGLAAAGTFITLLPLLSLPAL. The Cytoplasmic portion of the chain corresponds to 200 to 218; it reads PPPPQPREHPLKSLLAGFR. Residues 219–239 form a helical membrane-spanning segment; sequence FLLASPLVGGIALLGGLLTMA. At 240 to 256 the chain is on the periplasmic side; that stretch reads SAVRVLYPALADNWQMS. Residues 257–277 traverse the membrane as a helical segment; that stretch reads AAEIGFLYAAIPLGAAIGALT. Over 278–287 the chain is Cytoplasmic; sequence SGKLAHSARP. Residues 288–307 form a helical membrane-spanning segment; it reads GLLMLLSTLGSFLAIGLFGL. Over 308 to 313 the chain is Periplasmic; sequence MPMWIL. Residues 314–336 form a helical membrane-spanning segment; that stretch reads GVVCLALFGWLSAVSSLLQYTML. Residues 337 to 356 lie on the Cytoplasmic side of the membrane; the sequence is QTQTPEAMLGRINGLWTAQN. A helical transmembrane segment spans residues 357 to 377; the sequence is VTGDAIGAALLGGLGAMMTPV. Position 378 (alanine 378) is a topological domain, periplasmic. A helical transmembrane segment spans residues 379–399; sequence SASASGFGLLIIGVLLLLVLV. Residues 400-416 lie on the Cytoplasmic side of the membrane; the sequence is ELRRFRQTPPQVTASDS.

The protein belongs to the major facilitator superfamily. EntS (TC 2.A.1.38) family.

Its subcellular location is the cell inner membrane. In terms of biological role, component of an export pathway for enterobactin. The sequence is that of Enterobactin exporter EntS from Shigella boydii serotype 18 (strain CDC 3083-94 / BS512).